A 107-amino-acid polypeptide reads, in one-letter code: EPIDERMAL PATTERNING FACTOR-like protein 5 (107 aa).

A signal peptide spans 1 to 22; the sequence is MGVVLPTLIVYAFLLFFSSSSA. Intrachain disulfides connect Cys64–Cys98, Cys68–Cys74, and Cys71–Cys100.

This sequence belongs to the plant cysteine rich small secretory peptide family. Epidermal patterning factor subfamily. In terms of assembly, interacts with ERECTA. Expressed asymetically in the hypocotyl, on the side proximal to the folded cotyledons at germination. Detected in developing flowers, the chalazal region of ovules and near the root apex, but not in inflorescence stems. Expressed in cotyledons, flowers, adult leaves and fruits.

The protein resides in the secreted. Controls stomatal patterning. Mediates differentiation of stomatal lineage cells to pavement cells and stomatal development inhibition. TMM (AC Q9SSD1) functions to dampen or block CLL1 signaling. Acts as a growth-regulatory ligand for ERECTA family receptors. Promotes fruit growth and fertility. The polypeptide is EPIDERMAL PATTERNING FACTOR-like protein 5 (Arabidopsis thaliana (Mouse-ear cress)).